The following is a 101-amino-acid chain: Urease subunit gamma (101 aa).

The protein belongs to the urease gamma subunit family. Heterotrimer of UreA (gamma), UreB (beta) and UreC (alpha) subunits. Three heterotrimers associate to form the active enzyme.

The protein resides in the cytoplasm. The catalysed reaction is urea + 2 H2O + H(+) = hydrogencarbonate + 2 NH4(+). The protein operates within nitrogen metabolism; urea degradation; CO(2) and NH(3) from urea (urease route): step 1/1. The chain is Urease subunit gamma from Ureaplasma urealyticum serovar 10 (strain ATCC 33699 / Western).